Reading from the N-terminus, the 604-residue chain is Glutamine--fructose-6-phosphate aminotransferase [isomerizing] (604 aa).

The Nucleophile; for GATase activity role is filled by Cys2. The region spanning 2 to 219 is the Glutamine amidotransferase type-2 domain; it reads CGIMGAVSER…EGDSACVTTQ (218 aa). 2 SIS domains span residues 279–427 and 454–594; these read LRAS…DNRA and LASL…VDQP. The For Fru-6P isomerization activity role is filled by Lys599.

Homodimer.

The protein resides in the cytoplasm. It catalyses the reaction D-fructose 6-phosphate + L-glutamine = D-glucosamine 6-phosphate + L-glutamate. Its function is as follows. Catalyzes the first step in hexosamine metabolism, converting fructose-6P into glucosamine-6P using glutamine as a nitrogen source. In Legionella pneumophila (strain Lens), this protein is Glutamine--fructose-6-phosphate aminotransferase [isomerizing].